Consider the following 184-residue polypeptide: Cbp/p300-interacting transactivator 4 (184 aa).

Over residues Pro-18–Ala-28 the composition is skewed to low complexity. Disordered regions lie at residues Pro-18–Phe-67 and Thr-94–Ala-128. Pro residues predominate over residues Pro-104–Ala-126.

This sequence belongs to the CITED family. As to quaternary structure, interacts via its C-terminal region with the CH1 domain of CREBBP and EP300. Interacts with all TFAP2/AP-2 isoforms. In terms of tissue distribution, expressed in most tissues examined with highest levels of expression in heart, liver, skeletal muscle and pancreas. Also expressed in bladder cell line ECV-304 and in various breast cancer cell lines. Also detected in both in situ and invasive breast tumors where its expression is down-regulated and mostly restricted to the cytoplasm of malignant epithelium. Down-regulation of expression is associated with elevated levels of HIF1A and increased tumor growth and angiogenesis.

It is found in the nucleus. It localises to the cytoplasm. Acts as a transcriptional coactivator for TFAP2/AP-2. Enhances estrogen-dependent transactivation mediated by estrogen receptors. May function as an inhibitor of transactivation by HIF1A by disrupting HIF1A interaction with CREBBP. May be involved in regulation of gene expression during development and differentiation of blood cells, endothelial cells and mammary epithelial cells. This is Cbp/p300-interacting transactivator 4 from Homo sapiens (Human).